Reading from the N-terminus, the 786-residue chain is Neprilysin-3 (786 aa).

At 1–52 (MTRYKQTEFTEDDSSSIGGIQLNEATGHTGMQIRYHTARATWNWRSRNKTEK) the chain is on the cytoplasmic side. A helical; Signal-anchor for type II membrane protein membrane pass occupies residues 53 to 73 (WLLITTFVMAITIFTLLIVLF). Over 74–786 (TDGGSSDATK…MNPTEKCEVW (713 aa)) the chain is Extracellular. A Peptidase M13 domain is found at 102–786 (PCLNKHCIFA…MNPTEKCEVW (685 aa)). Disulfide bonds link cysteine 103-cysteine 108, cysteine 126-cysteine 771, cysteine 134-cysteine 731, cysteine 190-cysteine 450, and cysteine 659-cysteine 783. Residues asparagine 216, asparagine 226, asparagine 256, asparagine 279, asparagine 305, asparagine 325, asparagine 356, asparagine 388, asparagine 496, and asparagine 569 are each glycosylated (N-linked (GlcNAc...) asparagine). Zn(2+) is bound at residue histidine 622. Glutamate 623 is a catalytic residue. 2 residues coordinate Zn(2+): histidine 626 and glutamate 682. Aspartate 686 serves as the catalytic Proton donor. A glycan (N-linked (GlcNAc...) asparagine) is linked at asparagine 715.

This sequence belongs to the peptidase M13 family. Requires Zn(2+) as cofactor.

Its subcellular location is the cell membrane. It catalyses the reaction Preferential cleavage of polypeptides between hydrophobic residues, particularly with Phe or Tyr at P1'.. Its function is as follows. Metalloendoprotease which is required in the dorsal paired medial neurons for the proper formation of long-term (LTM) and middle-term memories (MTM). Also required in the mushroom body neurons where it functions redundantly with neprilysins Nep2 and Nep4 in normal LTM formation. This Drosophila melanogaster (Fruit fly) protein is Neprilysin-3.